The sequence spans 369 residues: Aminomethyltransferase (369 aa).

The protein belongs to the GcvT family. As to quaternary structure, the glycine cleavage system is composed of four proteins: P, T, L and H.

It carries out the reaction N(6)-[(R)-S(8)-aminomethyldihydrolipoyl]-L-lysyl-[protein] + (6S)-5,6,7,8-tetrahydrofolate = N(6)-[(R)-dihydrolipoyl]-L-lysyl-[protein] + (6R)-5,10-methylene-5,6,7,8-tetrahydrofolate + NH4(+). Its function is as follows. The glycine cleavage system catalyzes the degradation of glycine. The chain is Aminomethyltransferase from Xanthomonas oryzae pv. oryzae (strain PXO99A).